The sequence spans 334 residues: uncharacterized protein (334 aa).

Belongs to the Gfo/Idh/MocA family.

This is an uncharacterized protein from Rhizobium meliloti (Ensifer meliloti).